A 391-amino-acid chain; its full sequence is F-box/kelch-repeat protein At3g16740 (391 aa).

Residues 1-47 (MVQISDLPRDLTEEVLSRIPVTSMRAVRFTCKKWNTLSKDRSFTKKH) form the F-box domain. 2 Kelch repeats span residues 104-154 (KIFH…YEEK) and 163-215 (ILRF…LKGN).

Part of a SCF (ASK-cullin-F-box) protein ligase complex. Interacts with ASK11.

The protein resides in the nucleus. It functions in the pathway protein modification; protein ubiquitination. Component of SCF(ASK-cullin-F-box) E3 ubiquitin ligase complexes, which may mediate the ubiquitination and subsequent proteasomal degradation of target proteins. This is F-box/kelch-repeat protein At3g16740 from Arabidopsis thaliana (Mouse-ear cress).